A 160-amino-acid polypeptide reads, in one-letter code: Putative 4-hydroxy-4-methyl-2-oxoglutarate aldolase (160 aa).

Substrate is bound by residues 78–81 and R100; that span reads GDVI. An a divalent metal cation-binding site is contributed by D101.

It belongs to the class II aldolase/RraA-like family. Homotrimer. The cofactor is a divalent metal cation.

The enzyme catalyses 4-hydroxy-4-methyl-2-oxoglutarate = 2 pyruvate. It catalyses the reaction oxaloacetate + H(+) = pyruvate + CO2. Its function is as follows. Catalyzes the aldol cleavage of 4-hydroxy-4-methyl-2-oxoglutarate (HMG) into 2 molecules of pyruvate. Also contains a secondary oxaloacetate (OAA) decarboxylase activity due to the common pyruvate enolate transition state formed following C-C bond cleavage in the retro-aldol and decarboxylation reactions. This is Putative 4-hydroxy-4-methyl-2-oxoglutarate aldolase from Mycolicibacterium vanbaalenii (strain DSM 7251 / JCM 13017 / BCRC 16820 / KCTC 9966 / NRRL B-24157 / PYR-1) (Mycobacterium vanbaalenii).